The chain runs to 141 residues: ATP synthase epsilon chain (141 aa).

The protein belongs to the ATPase epsilon chain family. In terms of assembly, F-type ATPases have 2 components, CF(1) - the catalytic core - and CF(0) - the membrane proton channel. CF(1) has five subunits: alpha(3), beta(3), gamma(1), delta(1), epsilon(1). CF(0) has three main subunits: a, b and c.

It is found in the cell inner membrane. In terms of biological role, produces ATP from ADP in the presence of a proton gradient across the membrane. In Burkholderia cenocepacia (strain ATCC BAA-245 / DSM 16553 / LMG 16656 / NCTC 13227 / J2315 / CF5610) (Burkholderia cepacia (strain J2315)), this protein is ATP synthase epsilon chain.